The sequence spans 490 residues: Calcium-dependent protein kinase 12 (490 aa).

A Protein kinase domain is found at 22–280; it reads YFLGQVLGQG…AHQVLCHPWI (259 aa). ATP is bound by residues 28–36 and Lys51; that span reads LGQGQFGTT. Asp146 acts as the Proton acceptor in catalysis. Position 186 is a phosphoserine (Ser186). Positions 286-316 are autoinhibitory domain; sequence APDKPLDCAVVSRLKKFSAMNKLKKMALRVI. 4 consecutive EF-hand domains span residues 323–358, 359–394, 395–430, and 434–464; these read EEIG…VGSE, LMES…LNKL, EREE…FGIN, and LDEM…GNGT. The Ca(2+) site is built by Asp336, Asp338, Ser340, Thr342, Glu347, Asp372, Asp374, Ser376, Thr378, Glu383, Asp408, Asp410, Ser412, Tyr414, Glu419, Asp442, Asp444, Asp446, Gln448, and Glu453.

It belongs to the protein kinase superfamily. Ser/Thr protein kinase family. CDPK subfamily. As to quaternary structure, interacts weakly with DI19. In terms of tissue distribution, ubiquitously expressed.

The catalysed reaction is L-seryl-[protein] + ATP = O-phospho-L-seryl-[protein] + ADP + H(+). The enzyme catalyses L-threonyl-[protein] + ATP = O-phospho-L-threonyl-[protein] + ADP + H(+). With respect to regulation, activated by calcium. Autophosphorylation may play an important role in the regulation of the kinase activity. In terms of biological role, may play a role in signal transduction pathways that involve calcium as a second messenger. The polypeptide is Calcium-dependent protein kinase 12 (CPK12) (Arabidopsis thaliana (Mouse-ear cress)).